The following is a 275-amino-acid chain: Rhamnulose-1-phosphate aldolase (275 aa).

Residue Glu117 is part of the active site. Residues His141, His143, and His212 each coordinate Zn(2+).

The protein belongs to the aldolase class II family. RhaD subfamily. Homotetramer. The cofactor is Zn(2+).

The protein resides in the cytoplasm. It carries out the reaction L-rhamnulose 1-phosphate = (S)-lactaldehyde + dihydroxyacetone phosphate. The protein operates within carbohydrate degradation; L-rhamnose degradation; glycerone phosphate from L-rhamnose: step 3/3. Functionally, catalyzes the reversible cleavage of L-rhamnulose-1-phosphate to dihydroxyacetone phosphate (DHAP) and L-lactaldehyde. This is Rhamnulose-1-phosphate aldolase from Citrobacter koseri (strain ATCC BAA-895 / CDC 4225-83 / SGSC4696).